The primary structure comprises 670 residues: Transketolase, chromosomal (670 aa).

His32 contributes to the substrate binding site. Residues His72 and 120–122 (GPL) each bind thiamine diphosphate. Asp161 provides a ligand contact to Mg(2+). Thiamine diphosphate-binding residues include Gly162 and Asn191. Residues Asn191 and Ile193 each coordinate Mg(2+). His267, Arg364, and Ser391 together coordinate substrate. His267 is a thiamine diphosphate binding site. Glu417 serves as the catalytic Proton donor. Phe443 contacts thiamine diphosphate. 3 residues coordinate substrate: His467, Asp475, and Arg526.

This sequence belongs to the transketolase family. Homodimer. Mg(2+) serves as cofactor. The cofactor is Ca(2+). It depends on Mn(2+) as a cofactor. Co(2+) is required as a cofactor. Requires thiamine diphosphate as cofactor.

It catalyses the reaction D-sedoheptulose 7-phosphate + D-glyceraldehyde 3-phosphate = aldehydo-D-ribose 5-phosphate + D-xylulose 5-phosphate. Its pathway is carbohydrate biosynthesis; Calvin cycle. Functionally, catalyzes the transfer of a two-carbon ketol group from a ketose donor to an aldose acceptor, via a covalent intermediate with the cofactor thiamine pyrophosphate. This is Transketolase, chromosomal (cbbTC) from Cupriavidus necator (strain ATCC 17699 / DSM 428 / KCTC 22496 / NCIMB 10442 / H16 / Stanier 337) (Ralstonia eutropha).